We begin with the raw amino-acid sequence, 347 residues long: Putative phosphoesterase 078R (347 aa).

A divalent metal cation-binding residues include Asp52, Asn87, and His211.

This sequence belongs to the metallophosphoesterase superfamily. IIV-6 244L family.

This chain is Putative phosphoesterase 078R, found in Invertebrate iridescent virus 3 (IIV-3).